A 518-amino-acid chain; its full sequence is Efflux pump terJ (518 aa).

The helical transmembrane segment at 43–63 (IAFIVVVCMAQLVSQAGLGQV) threads the bilayer. N-linked (GlcNAc...) asparagine glycosylation is present at Asn-79. 12 helical membrane-spanning segments follow: residues 82-102 (QLSWFPAAYSLTVGTFILGAG), 112-132 (LLFTAGYFWLAIWTLVAAFAE), 135-155 (GPVFFCCCRVLQGIGPAFLLP), 177-197 (AFGSTAPSGFIFGGLVSALAA), 204-224 (WGFWFMAILEAVCGIAAIFWV), 244-264 (IAGCVTGISGLLLFNVALNMA), 272-292 (PYIYILLIASLVFFGLFGYIE), 311-331 (FVLATLACGWAAFGVWVFYGW), 339-359 (GISPLFACLQFSPAAISGFVA), 364-384 (GLILQKLPASVVMMISAAAFC), 400-420 (WAQLFVSIIVMPWGMEMSFPA), and 439-459 (SLVATIMNYAISLGLGFGAIV). Residue Asn-466 is glycosylated (N-linked (GlcNAc...) asparagine). Residues 477 to 497 (AWYLGVGLAASGIILTMFFAL) traverse the membrane as a helical segment.

This sequence belongs to the major facilitator superfamily.

Its subcellular location is the cell membrane. Its function is as follows. Efflux pump that might be required for efficient secretion of terrein or other secondary metabolies produced by the terrein genne cluster. The chain is Efflux pump terJ from Aspergillus terreus (strain NIH 2624 / FGSC A1156).